A 335-amino-acid polypeptide reads, in one-letter code: Tryptophan--tRNA ligase (335 aa).

ATP contacts are provided by residues 13 to 15 (QPS) and 21 to 22 (GN). Residues 14 to 22 (PSGELTIGN) carry the 'HIGH' region motif. Aspartate 138 provides a ligand contact to L-tryptophan. ATP-binding positions include 150–152 (GKD), isoleucine 189, and 198–202 (KMSKS). Residues 198-202 (KMSKS) carry the 'KMSKS' region motif.

This sequence belongs to the class-I aminoacyl-tRNA synthetase family. In terms of assembly, homodimer.

It localises to the cytoplasm. It carries out the reaction tRNA(Trp) + L-tryptophan + ATP = L-tryptophyl-tRNA(Trp) + AMP + diphosphate + H(+). Functionally, catalyzes the attachment of tryptophan to tRNA(Trp). The polypeptide is Tryptophan--tRNA ligase (Clostridium acetobutylicum (strain ATCC 824 / DSM 792 / JCM 1419 / IAM 19013 / LMG 5710 / NBRC 13948 / NRRL B-527 / VKM B-1787 / 2291 / W)).